Here is a 119-residue protein sequence, read N- to C-terminus: Large ribosomal subunit protein uL18 (119 aa).

Belongs to the universal ribosomal protein uL18 family. In terms of assembly, part of the 50S ribosomal subunit; part of the 5S rRNA/L5/L18/L25 subcomplex. Contacts the 5S and 23S rRNAs.

Its function is as follows. This is one of the proteins that bind and probably mediate the attachment of the 5S RNA into the large ribosomal subunit, where it forms part of the central protuberance. The protein is Large ribosomal subunit protein uL18 of Oceanobacillus iheyensis (strain DSM 14371 / CIP 107618 / JCM 11309 / KCTC 3954 / HTE831).